Consider the following 199-residue polypeptide: Protein-methionine-sulfoxide reductase heme-binding subunit MsrQ (199 aa).

The next 4 membrane-spanning stretches (helical) occupy residues 10–30 (WLKVCLHLAGFLPLLWLFWAI), 82–102 (LWCFVWATLHLTSYALLELGI), 116–136 (PYLTLGIISWLVLLALTLTST), and 153–173 (VVYLVAILAPIHYLWSVKILS).

It belongs to the MsrQ family. Heterodimer of a catalytic subunit (MsrP) and a heme-binding subunit (MsrQ). FMN serves as cofactor. Heme b is required as a cofactor.

It is found in the cell inner membrane. Its function is as follows. Part of the MsrPQ system that repairs oxidized periplasmic proteins containing methionine sulfoxide residues (Met-O), using respiratory chain electrons. Thus protects these proteins from oxidative-stress damage caused by reactive species of oxygen and chlorine generated by the host defense mechanisms. MsrPQ is essential for the maintenance of envelope integrity under bleach stress, rescuing a wide series of structurally unrelated periplasmic proteins from methionine oxidation, including the primary periplasmic chaperone SurA and the lipoprotein Pal. MsrQ provides electrons for reduction to the reductase catalytic subunit MsrP, using the quinone pool of the respiratory chain. This Salmonella dublin (strain CT_02021853) protein is Protein-methionine-sulfoxide reductase heme-binding subunit MsrQ.